Reading from the N-terminus, the 481-residue chain is RCARVCAVLFLFIQISYGQYQVPQVTVQALKPRGFKASIPDSPSVSLFVFQGNINRAISKSDIGTISGEILKAKDGRWTFEDPNVELKVGDVVNYYVVVVSNRGGYIKDNLSFTVSALEDPSSTGTGTDPVPTPTTCRPTATKLRSGVACAGQTIFEENFNTFREDVWQIEQYIPVYSTEFPFVSYQHLSQDPTVAVTGGNLRITPKLQQRMPGFTDSSIYSGSLNIFSGCTAPAEACMKDAWGASILPPVVSGRITSKAFAFTYGTVFVKAKLPQGDWIYPEILLEPFLKKYGSTHYSSGVIKIASARGNRELTSGYTDYSNKMLFGGPVMNLQCYDTLLESKASSNGRQWGDDFHEYVLRWAPERITLSVDGVEWARVEPTASGLSGRFPQTCSKLPRTFLAAGTKMAPFDDHFYLTLGVAAGSITEFPDGVQTSGSRPKPWTNTGSKAMLHFWEDMDSWFATWNQPQLLVDYVKVVAL.

Positions 1-18 are cleaved as a signal peptide; sequence RCARVCAVLFLFIQISYG. Residues 20–120 form the CBM39 domain; it reads YQVPQVTVQA…LSFTVSALED (101 aa). A glycan (N-linked (GlcNAc...) asparagine) is linked at asparagine 110. One can recognise a GH16 domain in the interval 124-481; sequence TGTGTDPVPT…LVDYVKVVAL (358 aa).

Belongs to the insect beta-1,3-glucan binding protein family.

Its subcellular location is the secreted. Involved in the recognition of invading microorganisms. Binds specifically to beta-1,3-glucan and activates the phenoloxidase cascade. The sequence is that of Beta-1,3-glucan-binding protein from Hyphantria cunea (Fall webworm moth).